Here is a 196-residue protein sequence, read N- to C-terminus: APGW-amide-related neuropeptide (196 aa).

An N-terminal signal peptide occupies residues 1 to 22 (METLNIFLVIFSLLGTIIIASS). Residues 23–48 (SDESSERKKRDLDTIDDTNNDFLTAD) constitute a propeptide that is removed on maturation. W54 bears the Tryptophan amide mark. Positions 58–68 (SFDDDILNNLD) are excised as a propeptide. W74 carries the tryptophan amide modification. A propeptide spanning residues 78-88 (SDMLFDSEEIE) is cleaved from the precursor. W94 is subject to Tryptophan amide. The propeptide occupies 98 to 105 (SSSLYDDE). A Tryptophan amide modification is found at W111. Positions 115–129 (SSALLDDLSLYNSIV) are excised as a propeptide. Tryptophan amide is present on W135. A propeptide spanning residues 139–146 (SDTFKVDI) is cleaved from the precursor. W151 and W158 each carry tryptophan amide. A propeptide spanning residues 162-196 (SGPNMCMDFQDEILQLYKLLNEAEKLHSECEALNI) is cleaved from the precursor.

As to expression, expressed in cerebral, pedal and visceral ganglia. TPGW-amide is found in pedal and cerebral ganglia and in shell adductor muscle (at protein level). RPGW-amide and KPGW-amide are found in pedal retractor muscle, ABRM and shell adductor muscle (at protein level).

RPGW-amide, KPGW-amide and TPGW-amide tetrapeptides are involved in control of muscle contraction and may function as neurotransmitters. These peptides increase tension of the pedal retractor muscle and, in conjunction with FMRF-amide, increase peak tension of the anterior byssus retractor muscle (ABRM). In Mytilus edulis (Blue mussel), this protein is APGW-amide-related neuropeptide.